The sequence spans 1059 residues: Isoleucine--tRNA ligase (1059 aa).

Residues 47–57 (PYTSGQMHLGT) carry the 'HIGH' region motif. The 'KMSKS' region signature appears at 606-610 (KMSKS). An ATP-binding site is contributed by Lys609.

Belongs to the class-I aminoacyl-tRNA synthetase family. IleS type 2 subfamily. Monomer. Zn(2+) is required as a cofactor.

It localises to the cytoplasm. The enzyme catalyses tRNA(Ile) + L-isoleucine + ATP = L-isoleucyl-tRNA(Ile) + AMP + diphosphate. In terms of biological role, catalyzes the attachment of isoleucine to tRNA(Ile). As IleRS can inadvertently accommodate and process structurally similar amino acids such as valine, to avoid such errors it has two additional distinct tRNA(Ile)-dependent editing activities. One activity is designated as 'pretransfer' editing and involves the hydrolysis of activated Val-AMP. The other activity is designated 'posttransfer' editing and involves deacylation of mischarged Val-tRNA(Ile). In Haloquadratum walsbyi (strain DSM 16790 / HBSQ001), this protein is Isoleucine--tRNA ligase.